We begin with the raw amino-acid sequence, 556 residues long: Formate--tetrahydrofolate ligase (556 aa).

ATP is bound at residue 65-72 (TPAGEGKT).

It belongs to the formate--tetrahydrofolate ligase family.

The enzyme catalyses (6S)-5,6,7,8-tetrahydrofolate + formate + ATP = (6R)-10-formyltetrahydrofolate + ADP + phosphate. It functions in the pathway one-carbon metabolism; tetrahydrofolate interconversion. This is Formate--tetrahydrofolate ligase from Symbiobacterium thermophilum (strain DSM 24528 / JCM 14929 / IAM 14863 / T).